The primary structure comprises 103 residues: MYAVIKTGGKQYKVAEGESIFVEKLDVQAGEEVVFDQVILVANGDDVKVGTPLVEGAKVVASVDKQGKEKKVVTFKYKPKKHSHSKYGHRQPYTKVTVKSIEA.

The protein belongs to the bacterial ribosomal protein bL21 family. Part of the 50S ribosomal subunit. Contacts protein L20.

This protein binds to 23S rRNA in the presence of protein L20. The chain is Large ribosomal subunit protein bL21 from Lactobacillus delbrueckii subsp. bulgaricus (strain ATCC 11842 / DSM 20081 / BCRC 10696 / JCM 1002 / NBRC 13953 / NCIMB 11778 / NCTC 12712 / WDCM 00102 / Lb 14).